A 360-amino-acid polypeptide reads, in one-letter code: Mannose-1-phosphate guanyltransferase beta-B (360 aa).

Belongs to the transferase hexapeptide repeat family.

It carries out the reaction alpha-D-mannose 1-phosphate + GTP + H(+) = GDP-alpha-D-mannose + diphosphate. Its pathway is nucleotide-sugar biosynthesis; GDP-alpha-D-mannose biosynthesis; GDP-alpha-D-mannose from alpha-D-mannose 1-phosphate (GTP route): step 1/1. Its function is as follows. Catalyzes the formation of GDP-mannose, an essential precursor of glycan moieties of glycoproteins and glycolipids. The polypeptide is Mannose-1-phosphate guanyltransferase beta-B (gmppb-b) (Xenopus laevis (African clawed frog)).